Reading from the N-terminus, the 586-residue chain is MAFVSNGTEADEEGFEDAYENIPVASKMDLRCALEECTMALNLFLNNKFSEALELLRPWAKESIYHALGYSTILVMQSAMTFEPQDVQMGITTMKEALQTCQRFRKRNTVVESLSNLVSKQSGDQLTEEEMHAEICYAECLLQKAALTFVQDENMINFIKGGIKIRTSYQIYKECHQMYSLAASQGKMCSDTHYQFEGGVKLGIGAFNLMLSLLPSRVLRLLEFIGFSGNRELGLSQLREGASGSSIRAILCVLTLLFYHTYISLILGTGEANLEEAEALLEPYLKKFPNGSIILFYAARIDILKGRFEQAQETFQKCIVSQQEWKQIHHLCYWELMWCHSFQQDWLQAYRYADLLSKESKWSKATYVFQKAALLSMLPEDVVKTTGEDIVALFRQVESLKQRIAGKSIPTEKFAVRKSRRYISDNPVKLTLPALEMMYVWNGFTIVGKRADLTENVLVTIEKAEVALQNETKVTEYLADDLCLVQLLKGVCLKHLGRLLQAELCFNQVIQSEKRVKYDHYLIPFTFYELGLLYKEQGDRDKAIRYIETAKGNYKDYSLESRLHFRIHAALSSLKGSPVSTPTTPS.

TPR repeat units follow at residues 292-325 (SIIL…QQEW), 483-516 (CLVQ…EKRV), and 524-557 (PFTF…YKDY).

It belongs to the TTC39 family.

May be involved in lipid metabolism. The polypeptide is Tetratricopeptide repeat protein 39B (ttc39b) (Xenopus laevis (African clawed frog)).